A 121-amino-acid chain; its full sequence is Small ribosomal subunit protein uS13 (121 aa).

A disordered region spans residues 92-121 (HRMGLPCRGQKTKTNARTRKGPRRGAARRK). Positions 101–121 (QKTKTNARTRKGPRRGAARRK) are enriched in basic residues.

This sequence belongs to the universal ribosomal protein uS13 family. As to quaternary structure, part of the 30S ribosomal subunit. Forms a loose heterodimer with protein S19. Forms two bridges to the 50S subunit in the 70S ribosome.

Its function is as follows. Located at the top of the head of the 30S subunit, it contacts several helices of the 16S rRNA. In the 70S ribosome it contacts the 23S rRNA (bridge B1a) and protein L5 of the 50S subunit (bridge B1b), connecting the 2 subunits; these bridges are implicated in subunit movement. Contacts the tRNAs in the A and P-sites. The protein is Small ribosomal subunit protein uS13 of Desulfotalea psychrophila (strain LSv54 / DSM 12343).